The primary structure comprises 409 residues: Peptidase T (409 aa).

Position 79 (His-79) interacts with Zn(2+). Asp-81 is a catalytic residue. Asp-140 contacts Zn(2+). Residue Glu-174 is the Proton acceptor of the active site. Zn(2+)-binding residues include Glu-175, Asp-197, and His-379.

This sequence belongs to the peptidase M20B family. Zn(2+) is required as a cofactor.

The protein resides in the cytoplasm. The catalysed reaction is Release of the N-terminal residue from a tripeptide.. Functionally, cleaves the N-terminal amino acid of tripeptides. The protein is Peptidase T of Lysinibacillus sphaericus (strain C3-41).